The sequence spans 310 residues: Probable deoxyhypusine synthase (310 aa).

Lys284 functions as the Nucleophile in the catalytic mechanism.

Belongs to the deoxyhypusine synthase family. NAD(+) serves as cofactor.

The catalysed reaction is [eIF5A protein]-L-lysine + spermidine = [eIF5A protein]-deoxyhypusine + propane-1,3-diamine. It participates in protein modification; eIF5A hypusination. Catalyzes the NAD-dependent oxidative cleavage of spermidine and the subsequent transfer of the butylamine moiety of spermidine to the epsilon-amino group of a specific lysine residue of the eIF-5A precursor protein to form the intermediate deoxyhypusine residue. The polypeptide is Probable deoxyhypusine synthase (dys) (Thermoplasma volcanium (strain ATCC 51530 / DSM 4299 / JCM 9571 / NBRC 15438 / GSS1)).